Consider the following 399-residue polypeptide: Leu/Ile/Val-binding protein homolog 7 (399 aa).

Positions 1–22 are cleaved as a signal peptide; sequence MEKHLIALSVAALLAGAAPASA.

This sequence belongs to the leucine-binding protein family.

Functionally, component of an amino-acid transport system. The sequence is that of Leu/Ile/Val-binding protein homolog 7 from Brucella suis biovar 1 (strain 1330).